A 476-amino-acid polypeptide reads, in one-letter code: Glycogen synthase (476 aa).

Residue Lys-15 participates in ADP-alpha-D-glucose binding.

The protein belongs to the glycosyltransferase 1 family. Bacterial/plant glycogen synthase subfamily.

The enzyme catalyses [(1-&gt;4)-alpha-D-glucosyl](n) + ADP-alpha-D-glucose = [(1-&gt;4)-alpha-D-glucosyl](n+1) + ADP + H(+). The protein operates within glycan biosynthesis; glycogen biosynthesis. Functionally, synthesizes alpha-1,4-glucan chains using ADP-glucose. The chain is Glycogen synthase from Bacillus anthracis.